Reading from the N-terminus, the 207-residue chain is Large ribosomal subunit protein uL4 (207 aa).

Residues 53-76 form a disordered region; that stretch reads NRSAVRGGGRKPWRQKGTGRARQG. The segment covering 60–71 has biased composition (basic residues); that stretch reads GGRKPWRQKGTG.

The protein belongs to the universal ribosomal protein uL4 family. Part of the 50S ribosomal subunit.

Its function is as follows. One of the primary rRNA binding proteins, this protein initially binds near the 5'-end of the 23S rRNA. It is important during the early stages of 50S assembly. It makes multiple contacts with different domains of the 23S rRNA in the assembled 50S subunit and ribosome. In terms of biological role, forms part of the polypeptide exit tunnel. The sequence is that of Large ribosomal subunit protein uL4 from Staphylococcus saprophyticus subsp. saprophyticus (strain ATCC 15305 / DSM 20229 / NCIMB 8711 / NCTC 7292 / S-41).